The primary structure comprises 245 residues: Leucyl/phenylalanyl-tRNA--protein transferase (245 aa).

The protein belongs to the L/F-transferase family.

The protein resides in the cytoplasm. The enzyme catalyses N-terminal L-lysyl-[protein] + L-leucyl-tRNA(Leu) = N-terminal L-leucyl-L-lysyl-[protein] + tRNA(Leu) + H(+). The catalysed reaction is N-terminal L-arginyl-[protein] + L-leucyl-tRNA(Leu) = N-terminal L-leucyl-L-arginyl-[protein] + tRNA(Leu) + H(+). It catalyses the reaction L-phenylalanyl-tRNA(Phe) + an N-terminal L-alpha-aminoacyl-[protein] = an N-terminal L-phenylalanyl-L-alpha-aminoacyl-[protein] + tRNA(Phe). Functionally, functions in the N-end rule pathway of protein degradation where it conjugates Leu, Phe and, less efficiently, Met from aminoacyl-tRNAs to the N-termini of proteins containing an N-terminal arginine or lysine. This Paraburkholderia phytofirmans (strain DSM 17436 / LMG 22146 / PsJN) (Burkholderia phytofirmans) protein is Leucyl/phenylalanyl-tRNA--protein transferase.